The primary structure comprises 265 residues: Zwei Ig domain protein zig-1 (265 aa).

Positions 1 to 17 (MKNLLLITFFVVSTVTA) are cleaved as a signal peptide. Topologically, residues 18 to 232 (LGGRGSKSAL…KMVDVRSEFQ (215 aa)) are extracellular. Ig-like C2-type domains follow at residues 41 to 108 (HATD…TPHG) and 120 to 220 (PVVH…MLLV). 2 N-linked (GlcNAc...) asparagine glycosylation sites follow: asparagine 83 and asparagine 193. Cysteines 155 and 202 form a disulfide. A helical transmembrane segment spans residues 233–253 (WVYPLAVILITIFLLVVIIVF). Over 254-265 (CEWRNKKSTSKA) the chain is Cytoplasmic.

In terms of tissue distribution, expressed in neurons and body wall muscles.

The protein resides in the cell membrane. Its function is as follows. Probably not involved in maintaining the position of ASI and ASH head neuron cell bodies and ventral nerve cord axons of PVQ, PVP, RMEV, AVK and HSN neurons. This chain is Zwei Ig domain protein zig-1, found in Caenorhabditis elegans.